Consider the following 199-residue polypeptide: Recombination protein RecR (199 aa).

Residues 57–72 form a C4-type zinc finger; it reads CEICGNMDTENICRIC. The Toprim domain maps to 80-175; it reads SVIAIVETVA…KISRLASGIP (96 aa).

The protein belongs to the RecR family.

Functionally, may play a role in DNA repair. It seems to be involved in an RecBC-independent recombinational process of DNA repair. It may act with RecF and RecO. This Rickettsia canadensis (strain McKiel) protein is Recombination protein RecR.